Here is a 769-residue protein sequence, read N- to C-terminus: Intron Large complex component GCFC2 (769 aa).

Disordered regions lie at residues 1–122 (MALR…PIVE) and 134–212 (RKRE…DENQ). Residues S16, S17, S19, and S85 each carry the phosphoserine modification. The residue at position 86 (T86) is a Phosphothreonine. 2 positions are modified to phosphoserine: S118 and S169. A compositionally biased stretch (basic and acidic residues) spans 190–201 (RMAEETSIRSEE). The span at 202-212 (SSEESQEDENQ) shows a compositional bias: acidic residues. 2 positions are modified to phosphoserine: S203 and S206. The stretch at 256-308 (NLEIIKKQLNNRLTLLQESHRSHQREYEKYEQDIKSSKTAIQNLESASDHAQN) forms a coiled coil.

It belongs to the GCF family. As to quaternary structure, found in the Intron Large (IL) complex, a post-mRNA release spliceosomal complex containing the excised intron, U2, U5 and U6 snRNPs, and splicing factors. Interacts with TFIP11 and DHX15.

It localises to the nucleus. The protein localises to the nucleoplasm. It is found in the nucleolus. In terms of biological role, involved in pre-mRNA splicing through regulating spliceosome C complex formation. May play a role during late-stage splicing events and turnover of excised introns. This Mus musculus (Mouse) protein is Intron Large complex component GCFC2 (Gcfc2).